The primary structure comprises 270 residues: MSKIAKTAIISPKAEINKGVEIGEFCVIGDGVKLDEGVKLHNNVTLQGHTFVGKNTEIFPFAVLGTQPQDLKYKGEYSELIIGEDNLIREFCMINPGTEGGIKKTLIGDKNLLMAYVHVAHDCVIGSHCILANGVTLAGHIEIGDYVNIGGLTAIHQFVRIAKGCMIAGKSALGKDVPPYCTVEGNRAFIRGLNRHRMRQLLESKDIDFIYALYKRLFRPIPSLRESAKLELEEHANNPFVKEICSFILESSRGVAYKSSEYSSEEKQEE.

Substrate contacts are provided by residues 69–72 (QDLK), His121, His140, and Gln157.

This sequence belongs to the transferase hexapeptide repeat family. LpxA subfamily. As to quaternary structure, homotrimer.

It is found in the cytoplasm. It carries out the reaction a (3R)-hydroxyacyl-[ACP] + UDP-N-acetyl-alpha-D-glucosamine = a UDP-3-O-[(3R)-3-hydroxyacyl]-N-acetyl-alpha-D-glucosamine + holo-[ACP]. It participates in glycolipid biosynthesis; lipid IV(A) biosynthesis; lipid IV(A) from (3R)-3-hydroxytetradecanoyl-[acyl-carrier-protein] and UDP-N-acetyl-alpha-D-glucosamine: step 1/6. In terms of biological role, involved in the biosynthesis of lipid A, a phosphorylated glycolipid that anchors the lipopolysaccharide to the outer membrane of the cell. This Helicobacter pylori (strain ATCC 700392 / 26695) (Campylobacter pylori) protein is Acyl-[acyl-carrier-protein]--UDP-N-acetylglucosamine O-acyltransferase.